Reading from the N-terminus, the 559-residue chain is POU domain protein 1 (559 aa).

In terms of domain architecture, POU-specific spans 259-333; that stretch reads EDLPSSDDLE…LLQKWLHEAD (75 aa). The homeobox DNA-binding region spans 351-410; sequence KRKKRTSIEANVKSILESSFMKLSKPSAQDISSLAEKLSLEKEVVRVWFCNRRQKEKRIT.

The protein belongs to the POU transcription factor family.

Its subcellular location is the nucleus. The chain is POU domain protein 1 (POU1) from Dugesia japonica (Planarian).